The chain runs to 129 residues: Small ribosomal subunit protein uS9 (129 aa).

It belongs to the universal ribosomal protein uS9 family.

In Chlorobium phaeobacteroides (strain DSM 266 / SMG 266 / 2430), this protein is Small ribosomal subunit protein uS9.